The chain runs to 150 residues: 3-dehydroquinate dehydratase (150 aa).

Y26 (proton acceptor) is an active-site residue. Residues N77, H83, and D90 each contribute to the substrate site. The active-site Proton donor is H103. Residues 104–105 (LS) and R114 each bind substrate.

The protein belongs to the type-II 3-dehydroquinase family. As to quaternary structure, homododecamer.

It catalyses the reaction 3-dehydroquinate = 3-dehydroshikimate + H2O. It participates in metabolic intermediate biosynthesis; chorismate biosynthesis; chorismate from D-erythrose 4-phosphate and phosphoenolpyruvate: step 3/7. In terms of biological role, catalyzes a trans-dehydration via an enolate intermediate. This Pectobacterium carotovorum subsp. carotovorum (strain PC1) protein is 3-dehydroquinate dehydratase.